Here is a 421-residue protein sequence, read N- to C-terminus: MSNLTEERWVAADLRAPLTPAGRTVVDLLAGVIPRISAEAADRDRTGTFPVEAFEQFAKLGLMGATVPAELGGLGLTRLYDVATALMRLAEADASTALAWHVQLSRGLTLTYEWQHGTPPVRAMAERLLRAMAEGEAAVCGALKDAPGVVTELHSDGAGGWLLSGRKVLVSMAPIATHFFVHAQRRDDDGSVFLAVPVVHRDAPGLTVLDNWDGLGMRASGTLEVVFDRCPVRADELLERGPVGARRDAVLAGQTVSSITMLGIYAGIAQAARDIAVGFCAGRGGEPRAGARALVAGLDTRLYALRTTVGAALTNADAASVDLSGDPDERGRRMMTPFQYAKMTVNELAPAVVDDCLSLVGGLAYTAGHPLSRLYRDVRAGGFMQPYSYVDAVDYLSGQALGLDRDNDYMSVRALRSRTSA.

This sequence belongs to the acyl-CoA dehydrogenase family. In terms of assembly, homotetramer. The cofactor is FAD.

The enzyme catalyses dTDP-beta-L-evernosamine + 2 NADPH + 2 O2 + H(+) = dTDP-2,3,6-trideoxy-3-C-methyl-4-O-methyl-3-nitroso-beta-L-arabino-hexopyranose + 2 NADP(+) + 3 H2O. It catalyses the reaction dTDP-beta-L-evernosamine + NADPH + O2 = dTDP-N-hydroxy-beta-L-evernosamine + NADP(+) + H2O. The catalysed reaction is dTDP-N-hydroxy-beta-L-evernosamine + NADPH + O2 + H(+) = dTDP-2,3,6-trideoxy-3-C-methyl-4-O-methyl-3-nitroso-beta-L-arabino-hexopyranose + NADP(+) + 2 H2O. It functions in the pathway antibiotic biosynthesis. In terms of biological role, nitrososynthase involved in the biosynthesis of everninomicin, a broad spectrum orthosomycin antibiotic. Catalyzes the double-oxidation of TDP-L-evernosamine to TDP-L-evernitrosose. The enzyme first oxidizes the substrate to a transient hydroxylamino intermediate, which is then further oxidized to nitroso sugar. The nitroso group is probably spontaneously oxidized giving TDP-L-evernitrose. In vitro, catalyzes the double-oxidation of TDP-L-epi-vancosamine to TDP-L-epi-vancosonitrose. Can also use biosynthetic progenitors of TDP-L-epi-vancosamine, but progenitors solely undergo single-oxidation reactions and terminate in the hydroxylamine oxidation state. The protein is L-evernosamine nitrososynthase of Micromonospora sp. (strain ATCC 39149 / NRRL 15099 / SCC 1413).